The chain runs to 355 residues: DNA polymerase IV (355 aa).

A UmuC domain is found at 4-185; the sequence is IIHIDMDCYF…LSLGKIPGVG (182 aa). The Mg(2+) site is built by D8 and D103. Residue E104 is part of the active site.

Belongs to the DNA polymerase type-Y family. In terms of assembly, monomer. Requires Mg(2+) as cofactor.

It is found in the cytoplasm. It carries out the reaction DNA(n) + a 2'-deoxyribonucleoside 5'-triphosphate = DNA(n+1) + diphosphate. Its function is as follows. Poorly processive, error-prone DNA polymerase involved in untargeted mutagenesis. Copies undamaged DNA at stalled replication forks, which arise in vivo from mismatched or misaligned primer ends. These misaligned primers can be extended by PolIV. Exhibits no 3'-5' exonuclease (proofreading) activity. May be involved in translesional synthesis, in conjunction with the beta clamp from PolIII. This Shewanella amazonensis (strain ATCC BAA-1098 / SB2B) protein is DNA polymerase IV.